A 285-amino-acid polypeptide reads, in one-letter code: Ribose-phosphate pyrophosphokinase (285 aa).

ATP is bound by residues 34 to 36 (DGE) and 91 to 92 (RQ). Residues His124 and Asp162 each coordinate Mg(2+). Lys185 is a catalytic residue. D-ribose 5-phosphate contacts are provided by residues Arg187, Asp211, and 215 to 219 (STGGT).

The protein belongs to the ribose-phosphate pyrophosphokinase family. Class III (archaeal) subfamily. Mg(2+) serves as cofactor.

The protein resides in the cytoplasm. It catalyses the reaction D-ribose 5-phosphate + ATP = 5-phospho-alpha-D-ribose 1-diphosphate + AMP + H(+). The protein operates within metabolic intermediate biosynthesis; 5-phospho-alpha-D-ribose 1-diphosphate biosynthesis; 5-phospho-alpha-D-ribose 1-diphosphate from D-ribose 5-phosphate (route I): step 1/1. Its function is as follows. Involved in the biosynthesis of the central metabolite phospho-alpha-D-ribosyl-1-pyrophosphate (PRPP) via the transfer of pyrophosphoryl group from ATP to 1-hydroxyl of ribose-5-phosphate (Rib-5-P). This Pyrococcus abyssi (strain GE5 / Orsay) protein is Ribose-phosphate pyrophosphokinase.